The following is a 172-amino-acid chain: Small ribosomal subunit protein uS5 (172 aa).

Positions 16–79 constitute an S5 DRBM domain; it reads LKEKLVHINR…EDGKKNVIKV (64 aa).

It belongs to the universal ribosomal protein uS5 family. In terms of assembly, part of the 30S ribosomal subunit. Contacts proteins S4 and S8.

Functionally, with S4 and S12 plays an important role in translational accuracy. In terms of biological role, located at the back of the 30S subunit body where it stabilizes the conformation of the head with respect to the body. This Pelodictyon phaeoclathratiforme (strain DSM 5477 / BU-1) protein is Small ribosomal subunit protein uS5.